The primary structure comprises 1737 residues: Intraflagellar transport protein osm-1 (1737 aa).

WD repeat units lie at residues Asp14–Phe53, Gly63–Lys103, Val110–Lys150, Thr151–Ile189, Thr191–Asp229, Gln233–Gly273, and Asp511–Thr553. 7 TPR repeats span residues Asn700–Tyr737, Ser803–Ile836, Val848–Val881, Thr907–Ile940, His979–Leu1012, Arg1037–Tyr1070, and Gly1137–Val1170.

The protein belongs to the IFT172 family. In terms of assembly, component of the IFT complex B composed of at least che-2, che-13, dyf-1, dyf-3, dyf-6, dyf-11, dyf-13, ift-20, ift-74, ift-81, ifta-2, osm-1, osm-5 and osm-6. Expressed in amphid and phasmid chemosensory neurons, where it appears to concentrate at the base of the transition zones, which correspond to the basal bodies of motile and sensory cilia. Moves in the retrograde direction along cilia and dendrites, suggesting that it is retrieved from the distal endings of the cilia by a retrograde transport pathway that moves it along cilia and then dendrites, back to the neuronal cell body.

The protein localises to the cell projection. Its subcellular location is the cilium. Component of the intraflagellar transport (IFT) complex B required for transport of proteins in the motile cilium. May be required for ciliary entrance and transport of specific ciliary cargo proteins such as che-3 which are related to motility. Required for the maintenance and formation of chemosensory cilia that detect chemosensory cues. The polypeptide is Intraflagellar transport protein osm-1 (Caenorhabditis elegans).